The primary structure comprises 281 residues: MGTQGSPVKSYDYLLKFLLVGDSDVGKGEILESLQDGAAESPYAYSNGIDYKTTTILLDGRRVKLELWDTSGQGRFCTIFRSYSRGAQGILLVYDITNRWSFDGIDRWIKEIDEHAPGVPRILVGNRLHLAFKRQVPTEQARAYAEKNCMTFFEVSPLCNFNVIESFTELSRIVLMRHGMEKIWRPNRVFSLQDLCCRAIVSCTPVHLIDKLPLPVTIKSHLKSFSMANGMNAVMMHGRSYSLASGAGGSGSKGNSLKRSKSIRPPQSPPQNCSRSNCKIS.

Residues S23, G26, K27, and S46 each coordinate GTP. Residues 41-49 (SPYAYSNGI) form a switch-I region. Positions 46 and 69 each coordinate Mg(2+). The GTP site is built by G72, N126, and R127. The switch-II stretch occupies residues 72–88 (GQGRFCTIFRSYSRGAQ). The region spanning 175 to 228 (LMRHGMEKIWRPNRVFSLQDLCCRAIVSCTPVHLIDKLPLPVTIKSHLKSFSMA) is the SOCS box domain. The disordered stretch occupies residues 245-281 (SGAGGSGSKGNSLKRSKSIRPPQSPPQNCSRSNCKIS). Positions 270–281 (PQNCSRSNCKIS) are enriched in polar residues. C273 is lipidated: S-palmitoyl cysteine. C278 is lipidated: S-geranylgeranyl cysteine.

The protein belongs to the small GTPase superfamily. Rab family. As to quaternary structure, component of the cullin-5-RING E3 ubiquitin-protein ligase complex (ECS(RAB40C) complex) composed of CUL5, Elongin BC (ELOB and ELOC), RNF7/RBX2 and RAB40C. Interacts with protein phosphatase 6 (PP6) complex components ANKRD28, ANKRD52, PPP6C, PP6R1 and PP6R2; the interaction leads to ANKRD28 ubiquitination and decreased PP6 activity. Interacts with DAB2IP; DAB2IP acts as a GAP for RAB40C. The cofactor is Mg(2+).

The protein resides in the cell membrane. It is found in the cytoplasm. Its subcellular location is the cytosol. It localises to the golgi apparatus membrane. The catalysed reaction is GTP + H2O = GDP + phosphate + H(+). The protein operates within protein modification; protein ubiquitination. Its activity is regulated as follows. Regulated by guanine nucleotide exchange factors (GEFs) which promote the exchange of bound GDP for free GTP. Regulated by GTPase activating proteins (GAPs) including DAB2IP, which increase the GTP hydrolysis activity. Inhibited by GDP dissociation inhibitors (GDIs). Its function is as follows. RAB40C small GTPase acts as substrate-recognition component of the ECS(RAB40C) E3 ubiquitin ligase complex which mediates the ubiquitination and subsequent proteasomal degradation of target proteins. The Rab40 subfamily belongs to the Rab family that are key regulators of intracellular membrane trafficking, from the formation of transport vesicles to their fusion with membranes. Rabs cycle between an inactive GDP-bound form and an active GTP-bound form that is able to recruit to membranes different sets of downstream effectors directly responsible for vesicle formation, movement, tethering and fusion. As part of the ECS(RAB40C) complex, mediates ANKRD28 ubiquitination and degradation, thereby inhibiting protein phosphatase 6 (PP6) complex activity and focal adhesion assembly during cell migration. Also negatively regulate lipid droplets accumulation in a GTP-dependent manner. The polypeptide is Ras-related protein Rab-40C (Mus musculus (Mouse)).